Here is a 503-residue protein sequence, read N- to C-terminus: L-amino-acid oxidase (503 aa).

Residues M1–C18 form the signal peptide. A disulfide bridge connects residues C28 and C191. Residues M61–S62, E81–A82, R89, and G105–R108 contribute to the FAD site. Position 108 (R108) interacts with substrate. N-linked (GlcNAc...) asparagine glycosylation is present at N190. H241 is a substrate binding site. V279 lines the FAD pocket. Cysteines 349 and 430 form a disulfide. Substrate is bound at residue Y390. FAD contacts are provided by residues E475 and G482 to T487. G482–W483 contributes to the substrate binding site.

This sequence belongs to the flavin monoamine oxidase family. FIG1 subfamily. Homodimer; non-covalently linked. Requires FAD as cofactor. In terms of processing, N-glycosylated. The enzymatic activity is not affected by deglycosylation. In terms of tissue distribution, expressed by the venom gland.

Its subcellular location is the secreted. The catalysed reaction is an L-alpha-amino acid + O2 + H2O = a 2-oxocarboxylate + H2O2 + NH4(+). It catalyses the reaction L-leucine + O2 + H2O = 4-methyl-2-oxopentanoate + H2O2 + NH4(+). The enzyme catalyses L-phenylalanine + O2 + H2O = 3-phenylpyruvate + H2O2 + NH4(+). It carries out the reaction L-methionine + O2 + H2O = 4-methylsulfanyl-2-oxobutanoate + H2O2 + NH4(+). The catalysed reaction is L-isoleucine + O2 + H2O = (S)-3-methyl-2-oxopentanoate + H2O2 + NH4(+). Its function is as follows. Catalyzes an oxidative deamination of predominantly hydrophobic and aromatic L-amino acids, thus producing hydrogen peroxide that may contribute to the diverse toxic effects of this enzyme. Is highly active on L-Met, L-Leu, L-Phe and L-Ile. Exhibits diverse biological activities, such as antibacterial on both Gram-positive and Gram-negative bacteria and antiparasitic activities, as well as induction of platelet aggregation. Effects of snake L-amino oxidases on platelets are controversial, since they either induce aggregation or inhibit agonist-induced aggregation. These different effects are probably due to different experimental conditions. This protein may also have activities in hemorrhage, hemolysis, edema, and apoptosis. The sequence is that of L-amino-acid oxidase from Bothrops pauloensis (Neuwied's lancehead).